The sequence spans 120 residues: Glycine cleavage system H protein (120 aa).

Positions 17–99 (VATVGITEHA…QGAAWFFKLK (83 aa)) constitute a Lipoyl-binding domain. An N6-lipoyllysine modification is found at K58.

It belongs to the GcvH family. The glycine cleavage system is composed of four proteins: P, T, L and H. (R)-lipoate is required as a cofactor.

Its function is as follows. The glycine cleavage system catalyzes the degradation of glycine. The H protein shuttles the methylamine group of glycine from the P protein to the T protein. The sequence is that of Glycine cleavage system H protein from Sinorhizobium medicae (strain WSM419) (Ensifer medicae).